The sequence spans 457 residues: Tubulin beta chain (457 aa).

GTP is bound by residues Q11, E69, S138, G142, T143, G144, N204, and N226. E69 lines the Mg(2+) pocket. The segment at 431 to 457 is disordered; the sequence is EGEEEEDAYAEGAVVNGDQSYEDQYAA.

Belongs to the tubulin family. As to quaternary structure, dimer of alpha and beta chains. A typical microtubule is a hollow water-filled tube with an outer diameter of 25 nm and an inner diameter of 15 nM. Alpha-beta heterodimers associate head-to-tail to form protofilaments running lengthwise along the microtubule wall with the beta-tubulin subunit facing the microtubule plus end conferring a structural polarity. Microtubules usually have 13 protofilaments but different protofilament numbers can be found in some organisms and specialized cells. It depends on Mg(2+) as a cofactor.

It localises to the cytoplasm. The protein resides in the cytoskeleton. Tubulin is the major constituent of microtubules, a cylinder consisting of laterally associated linear protofilaments composed of alpha- and beta-tubulin heterodimers. Microtubules grow by the addition of GTP-tubulin dimers to the microtubule end, where a stabilizing cap forms. Below the cap, tubulin dimers are in GDP-bound state, owing to GTPase activity of alpha-tubulin. The polypeptide is Tubulin beta chain (TUBB1) (Porphyra purpurea (Red seaweed)).